A 305-amino-acid chain; its full sequence is Cysteine synthase (305 aa).

Lys-45 is modified (N6-(pyridoxal phosphate)lysine). Pyridoxal 5'-phosphate-binding positions include Asn-75, 179–183, and Ser-266; that span reads GSGGT.

This sequence belongs to the cysteine synthase/cystathionine beta-synthase family. Homodimer. The cofactor is pyridoxal 5'-phosphate.

The catalysed reaction is O-acetyl-L-serine + hydrogen sulfide = L-cysteine + acetate. The protein operates within amino-acid biosynthesis; L-cysteine biosynthesis; L-cysteine from L-serine: step 2/2. This chain is Cysteine synthase (cysM), found in Helicobacter pylori (strain J99 / ATCC 700824) (Campylobacter pylori J99).